An 84-amino-acid polypeptide reads, in one-letter code: Sulfur carrier protein TusA (84 aa).

Catalysis depends on C19, which acts as the Cysteine persulfide intermediate.

This sequence belongs to the sulfur carrier protein TusA family. Interacts with IscS.

Its subcellular location is the cytoplasm. It participates in tRNA modification. Its function is as follows. Sulfur carrier protein involved in sulfur trafficking in the cell. Part of a sulfur-relay system required for 2-thiolation during synthesis of 2-thiouridine of the modified wobble base 5-methylaminomethyl-2-thiouridine (mnm(5)s(2)U) in tRNA. Interacts with IscS and stimulates its cysteine desulfurase activity. Accepts an activated sulfur from IscS, which is then transferred to TusD, and thus determines the direction of sulfur flow from IscS to 2-thiouridine formation. Also appears to be involved in sulfur transfer for the biosynthesis of molybdopterin. The protein is Sulfur carrier protein TusA of Photorhabdus laumondii subsp. laumondii (strain DSM 15139 / CIP 105565 / TT01) (Photorhabdus luminescens subsp. laumondii).